A 145-amino-acid polypeptide reads, in one-letter code: Sperm mitochondrial-associated cysteine-rich protein (145 aa).

Residues S38, S45, S113, and S131 each carry the phosphoserine modification. Residues 105 to 145 (CSSENKTESDSDGSGQTQDRGAQTQQSPQGGQGNWNQKKTK) form a disordered region. The span at 116-145 (DGSGQTQDRGAQTQQSPQGGQGNWNQKKTK) shows a compositional bias: polar residues.

As to expression, testis. Selectively expressed in the spermatids of seminiferous tubules and in flagella of epididymal sperm.

The protein localises to the cytoplasm. Its subcellular location is the mitochondrion membrane. In terms of biological role, involved in sperm motility. Its absence is associated with genetic background dependent male infertility. Infertility may be due to reduced sperm motility in the female reproductive tract and inability to penetrate the oocyte zona pellucida. The protein is Sperm mitochondrial-associated cysteine-rich protein (Smcp) of Rattus norvegicus (Rat).